A 278-amino-acid polypeptide reads, in one-letter code: Dehydrogenase/reductase SDR family member 4 (278 aa).

Position 36-60 (36-60 (LVTASTDGIGFAIARRLAQDGAHVV)) interacts with NADP(+). K92 is subject to N6-acetyllysine; alternate. N6-succinyllysine; alternate is present on K92. K105 carries the N6-acetyllysine modification. The residue at position 140 (I140) is a Phosphoserine. S169 provides a ligand contact to substrate. Residue Y182 is the Proton acceptor of the active site. Position 186 (K186) interacts with NADP(+). K216 carries the N6-acetyllysine; alternate modification. K216 is subject to N6-succinyllysine; alternate. S220 carries the post-translational modification Phosphoserine. 2 positions are modified to N6-succinyllysine: K227 and K234. The Peroxisomal targeting signal signature appears at 276 to 278 (SRL).

This sequence belongs to the short-chain dehydrogenases/reductases (SDR) family. Homotetramer. In terms of tissue distribution, predominantly expressed in normal cervix (at protein level). Expressed in some neoplastic cervical tissues, but not in normal cervix (at protein level). As to expression, expressed in a few neoplastic cervical tissues. In terms of tissue distribution, high expression in liver.

Its subcellular location is the peroxisome. It is found in the nucleus. It carries out the reaction a secondary alcohol + NADP(+) = a ketone + NADPH + H(+). The enzyme catalyses 3beta-hydroxy-5beta-pregnane-20-one + NADP(+) = 5beta-pregnan-3,20-dione + NADPH + H(+). The catalysed reaction is 5beta-dihydrotestosterone + NADPH + H(+) = 5beta-androstane-3beta,17beta-diol + NADP(+). It catalyses the reaction 5beta-androstane-3,17-dione + NADPH + H(+) = 3beta-hydroxy-5beta-androstane-17-one + NADP(+). It carries out the reaction isatin + NADPH + H(+) = 3-hydroxyindolin-2-one + NADP(+). The enzyme catalyses lithocholate + NADP(+) = 3-oxo-5beta-cholan-24-oate + NADPH + H(+). The catalysed reaction is 3-oxo-5beta-cholan-24-oate + NADPH + H(+) = isolithocholate + NADP(+). Inhibited by flavonoids (quercetin and genistein), cetylpyridium chloride, phenylhexane and valproic acid. Low inhibition is observed with fatty acids (myristic acid and lauric acid). No significant inhibition is observed with barbital, dicumarol, indomethacin, metyrapone, ethacrynic acid, disulfiram, hexestrol and benzodiazepines (diazepam and nitrazepam). NADPH-dependent oxidoreductase which catalyzes the reduction of a variety of compounds bearing carbonyl groups including ketosteroids, alpha-dicarbonyl compounds, aldehydes, aromatic ketones and quinones. Reduces 3-ketosteroids and benzil into 3beta-hydroxysteroids and R-benzoin, respectively, in contrast to the stereoselectivity of non-primate DHRS4s which produce 3alpha-hydroxysteroids and S-benzoin. Diplays low activity toward all-trans-retinal and no activity toward 9-cis-retinal as compared to non-primate mammals. In the reverse reaction, catalyze the NAD-dependent oxidation of 3beta-hydroxysteroids and alcohol, but with much lower efficiency. Involved in the metabolism of 3beta-hydroxysteroids, isatin and xenobiotic carbonyl compounds. Functionally, no detected catalytic activity in vitro, possibly due to the lack of catalytic site. In terms of biological role, NADPH-dependent oxidoreductase which catalyzes the reduction of a variety of compounds bearing carbonyl groups including ketosteroids, alpha-dicarbonyl compounds, aldehydes, aromatic ketones and quinones. Involved in the metabolism of 3beta-hydroxysteroids, isatin and xenobiotic carbonyl compounds. Has a higher catalytic activity for xenobiotic alpha-dicarbonyl compounds, sucha as benzil, than isoform 1 and is involved in benzil detoxification. The chain is Dehydrogenase/reductase SDR family member 4 from Homo sapiens (Human).